The sequence spans 691 residues: DNA ligase (691 aa).

NAD(+)-binding positions include 41–45 (DAEYD), 90–91 (SL), and glutamate 130. Catalysis depends on lysine 132, which acts as the N6-AMP-lysine intermediate. Arginine 153, glutamate 190, lysine 307, and lysine 331 together coordinate NAD(+). The Zn(2+) site is built by cysteine 425, cysteine 428, cysteine 443, and cysteine 449. The BRCT domain maps to 610–691 (APQGVLAGKT…LHQLLEGNTP (82 aa)).

This sequence belongs to the NAD-dependent DNA ligase family. LigA subfamily. It depends on Mg(2+) as a cofactor. Mn(2+) is required as a cofactor.

The enzyme catalyses NAD(+) + (deoxyribonucleotide)n-3'-hydroxyl + 5'-phospho-(deoxyribonucleotide)m = (deoxyribonucleotide)n+m + AMP + beta-nicotinamide D-nucleotide.. DNA ligase that catalyzes the formation of phosphodiester linkages between 5'-phosphoryl and 3'-hydroxyl groups in double-stranded DNA using NAD as a coenzyme and as the energy source for the reaction. It is essential for DNA replication and repair of damaged DNA. The chain is DNA ligase from Burkholderia cenocepacia (strain HI2424).